A 1229-amino-acid polypeptide reads, in one-letter code: Receptor-type adenylate cyclase GRESAG 4.3 (1229 aa).

The Cytoplasmic segment spans residues 1–24; sequence MIARVCRLTKHSKPPHLPITLTTP. Residues 25 to 45 form a helical membrane-spanning segment; it reads TLFLVVLVLLQLHPICVLVNV. Topologically, residues 46–845 are extracellular; that stretch reads DDGGGVTVKA…PNGNALTPAQ (800 aa). Residues asparagine 77, asparagine 84, asparagine 626, asparagine 693, and asparagine 768 are each glycosylated (N-linked (GlcNAc...) asparagine). The chain crosses the membrane as a helical span at residues 846–866; the sequence is LAGVVGGSLFVVALAICLSVL. Residues 867–1229 lie on the Cytoplasmic side of the membrane; the sequence is ACFTLRGTRD…SNDLSDMIRV (363 aa). Residues 889–1043 form the Guanylate cyclase domain; the sequence is TLIFTDIESS…RTSNMAARTE (155 aa). Aspartate 894 and aspartate 937 together coordinate Mg(2+).

It belongs to the adenylyl cyclase class-3 family. It depends on Mg(2+) as a cofactor.

It is found in the membrane. The enzyme catalyses ATP = 3',5'-cyclic AMP + diphosphate. Could act as a receptor for an unknown ligand. In Trypanosoma brucei brucei, this protein is Receptor-type adenylate cyclase GRESAG 4.3 (GRESAG 4.3).